Consider the following 509-residue polypeptide: ATP synthase subunit alpha (509 aa).

169–176 (GDRQTGKT) contributes to the ATP binding site.

This sequence belongs to the ATPase alpha/beta chains family. F-type ATPases have 2 components, CF(1) - the catalytic core - and CF(0) - the membrane proton channel. CF(1) has five subunits: alpha(3), beta(3), gamma(1), delta(1), epsilon(1). CF(0) has three main subunits: a(1), b(2) and c(9-12). The alpha and beta chains form an alternating ring which encloses part of the gamma chain. CF(1) is attached to CF(0) by a central stalk formed by the gamma and epsilon chains, while a peripheral stalk is formed by the delta and b chains.

Its subcellular location is the cell inner membrane. The enzyme catalyses ATP + H2O + 4 H(+)(in) = ADP + phosphate + 5 H(+)(out). Produces ATP from ADP in the presence of a proton gradient across the membrane. The alpha chain is a regulatory subunit. The protein is ATP synthase subunit alpha of Rhizobium johnstonii (strain DSM 114642 / LMG 32736 / 3841) (Rhizobium leguminosarum bv. viciae).